We begin with the raw amino-acid sequence, 360 residues long: Photosystem II protein D1 (360 aa).

A run of 3 helical transmembrane segments spans residues 29 to 46, 118 to 133, and 142 to 156; these read YIGW…SAIS, HFFI…EWEL, and WICV…AAAA. A chlorophyll a-binding site is contributed by His118. Tyr126 serves as a coordination point for pheophytin a. Asp170 and Glu189 together coordinate [CaMn4O5] cluster. Residues 197–218 form a helical membrane-spanning segment; that stretch reads FHMLGVAGVFGGSLFSAMHGSL. His198 is a binding site for chlorophyll a. Residues His215 and 264 to 265 contribute to the a quinone site; that span reads SF. His215 is a binding site for Fe cation. His272 provides a ligand contact to Fe cation. A helical membrane pass occupies residues 274 to 288; sequence FLGAWPVVGIWFTAM. Residues His332, Glu333, Asp342, and Ala344 each coordinate [CaMn4O5] cluster. The propeptide occupies 345–360; sequence AGESLPVALVAPAVAA.

It belongs to the reaction center PufL/M/PsbA/D family. As to quaternary structure, PSII is composed of 1 copy each of membrane proteins PsbA, PsbB, PsbC, PsbD, PsbE, PsbF, PsbH, PsbI, PsbJ, PsbK, PsbL, PsbM, PsbT, PsbX, PsbY, PsbZ, Psb30/Ycf12, at least 3 peripheral proteins of the oxygen-evolving complex and a large number of cofactors. It forms dimeric complexes. The cofactor is The D1/D2 heterodimer binds P680, chlorophylls that are the primary electron donor of PSII, and subsequent electron acceptors. It shares a non-heme iron and each subunit binds pheophytin, quinone, additional chlorophylls, carotenoids and lipids. D1 provides most of the ligands for the Mn4-Ca-O5 cluster of the oxygen-evolving complex (OEC). There is also a Cl(-1) ion associated with D1 and D2, which is required for oxygen evolution. The PSII complex binds additional chlorophylls, carotenoids and specific lipids.. Tyr-161 forms a radical intermediate that is referred to as redox-active TyrZ, YZ or Y-Z. In terms of processing, C-terminally processed by CTPA; processing is essential to allow assembly of the oxygen-evolving complex and thus photosynthetic growth.

The protein localises to the plastid. It is found in the chloroplast thylakoid membrane. The catalysed reaction is 2 a plastoquinone + 4 hnu + 2 H2O = 2 a plastoquinol + O2. Functionally, photosystem II (PSII) is a light-driven water:plastoquinone oxidoreductase that uses light energy to abstract electrons from H(2)O, generating O(2) and a proton gradient subsequently used for ATP formation. It consists of a core antenna complex that captures photons, and an electron transfer chain that converts photonic excitation into a charge separation. The D1/D2 (PsbA/PsbD) reaction center heterodimer binds P680, the primary electron donor of PSII as well as several subsequent electron acceptors. The protein is Photosystem II protein D1 of Emiliania huxleyi (Coccolithophore).